The sequence spans 182 residues: ATP-dependent protease subunit HslV (182 aa).

Thr-12 is an active-site residue. Positions 167, 170, and 173 each coordinate Na(+).

Belongs to the peptidase T1B family. HslV subfamily. As to quaternary structure, a double ring-shaped homohexamer of HslV is capped on each side by a ring-shaped HslU homohexamer. The assembly of the HslU/HslV complex is dependent on binding of ATP.

It localises to the cytoplasm. The enzyme catalyses ATP-dependent cleavage of peptide bonds with broad specificity.. With respect to regulation, allosterically activated by HslU binding. Functionally, protease subunit of a proteasome-like degradation complex believed to be a general protein degrading machinery. The chain is ATP-dependent protease subunit HslV from Chlorobium phaeobacteroides (strain DSM 266 / SMG 266 / 2430).